The chain runs to 137 residues: L-ectoine synthase (137 aa).

The segment at 115–137 (EVHDESGAYPADPELAREPVAAD) is disordered.

This sequence belongs to the ectoine synthase family.

The catalysed reaction is (2S)-4-acetamido-2-aminobutanoate = L-ectoine + H2O. The protein operates within amine and polyamine biosynthesis; ectoine biosynthesis; L-ectoine from L-aspartate 4-semialdehyde: step 3/3. Catalyzes the circularization of gamma-N-acetyl-alpha,gamma-diaminobutyric acid (ADABA) to ectoine (1,4,5,6-tetrahydro-2-methyl-4-pyrimidine carboxylic acid), which is an excellent osmoprotectant. In Sphingopyxis alaskensis (strain DSM 13593 / LMG 18877 / RB2256) (Sphingomonas alaskensis), this protein is L-ectoine synthase.